The sequence spans 506 residues: NAD(P)H-quinone oxidoreductase subunit 2 (506 aa).

Transmembrane regions (helical) follow at residues Ala14–Ala34, Trp42–Trp62, Leu79–Trp99, Pro108–Gly128, Leu132–Tyr152, Leu167–Leu187, Phe206–Val226, Pro240–Ile260, Leu276–Gln296, Met302–Thr322, Val330–Phe350, Leu374–Gly394, and Leu409–Ile429.

The protein belongs to the complex I subunit 2 family. As to quaternary structure, NDH-1 can be composed of about 15 different subunits; different subcomplexes with different compositions have been identified which probably have different functions.

It localises to the cellular thylakoid membrane. The enzyme catalyses a plastoquinone + NADH + (n+1) H(+)(in) = a plastoquinol + NAD(+) + n H(+)(out). It carries out the reaction a plastoquinone + NADPH + (n+1) H(+)(in) = a plastoquinol + NADP(+) + n H(+)(out). In terms of biological role, NDH-1 shuttles electrons from an unknown electron donor, via FMN and iron-sulfur (Fe-S) centers, to quinones in the respiratory and/or the photosynthetic chain. The immediate electron acceptor for the enzyme in this species is believed to be plastoquinone. Couples the redox reaction to proton translocation, and thus conserves the redox energy in a proton gradient. Cyanobacterial NDH-1 also plays a role in inorganic carbon-concentration. The chain is NAD(P)H-quinone oxidoreductase subunit 2 from Prochlorococcus marinus (strain MIT 9215).